Here is a 364-residue protein sequence, read N- to C-terminus: Anhydro-N-acetylmuramic acid kinase (364 aa).

ATP is bound at residue Gly-11–Asp-18.

It belongs to the anhydro-N-acetylmuramic acid kinase family.

The enzyme catalyses 1,6-anhydro-N-acetyl-beta-muramate + ATP + H2O = N-acetyl-D-muramate 6-phosphate + ADP + H(+). Its pathway is amino-sugar metabolism; 1,6-anhydro-N-acetylmuramate degradation. The protein operates within cell wall biogenesis; peptidoglycan recycling. Functionally, catalyzes the specific phosphorylation of 1,6-anhydro-N-acetylmuramic acid (anhMurNAc) with the simultaneous cleavage of the 1,6-anhydro ring, generating MurNAc-6-P. Is required for the utilization of anhMurNAc either imported from the medium or derived from its own cell wall murein, and thus plays a role in cell wall recycling. In Pseudomonas syringae pv. syringae (strain B728a), this protein is Anhydro-N-acetylmuramic acid kinase.